A 442-amino-acid chain; its full sequence is Small RNA 2'-O-methyltransferase (442 aa).

The S-adenosyl-L-methionine site is built by glycine 125 and aspartate 151. Positions 209, 212, 213, and 260 each coordinate Mg(2+).

The protein belongs to the methyltransferase superfamily. HEN1 family. Mg(2+) serves as cofactor. As to expression, broadly expressed in the germline and somatic tissues in both hermaphrodites and males.

It localises to the cytoplasm. The protein resides in the nucleus. The protein localises to the nucleoplasm. It is found in the cytoplasmic granule. The enzyme catalyses small RNA 3'-end nucleotide + S-adenosyl-L-methionine = small RNA 3'-end 2'-O-methylnucleotide + S-adenosyl-L-homocysteine + H(+). Its function is as follows. Methyltransferase that adds a 2'-O-methyl group at the 3'-end of PIWI-interacting RNAs (piRNAs) and small interfering RNAs (siRNAs) which are classes of regulatory RNAs that are involved in gene silencing in endogenous RNA interference (RNAi) pathways. Methylation protects the 3'-end of small RNAs from tailing and trimming and could constitute a recognition signal for appropriate argonaute machineries. Methylates and stabilizes 26G-siRNAs (a class of 26 nucleotide siRNAs that possess a monophosphorylated guanine residue at the 5'-end) when they are bound by argonaute protein ergo-1. This occurs in the female germline and embryo, but not in the male germline. Does not methylate 26G-siRNAs bound by argonaute proteins alg-3 or alg-4. Methylates and stabilizes 21U-piRNAs, which are a class of 21 nucleotide piRNAs that possess a uracil residue at the 5'-end, in the male and female germline. In addition, may play a role in exogenous RNAi (exoRNAi) pathways in the germline. The chain is Small RNA 2'-O-methyltransferase from Caenorhabditis elegans.